The sequence spans 585 residues: Proline--tRNA ligase (585 aa).

An Isoglutamyl lysine isopeptide (Lys-Gln) (interchain with Q-Cter in protein Pup) cross-link involves residue K173.

Belongs to the class-II aminoacyl-tRNA synthetase family. ProS type 1 subfamily. In terms of assembly, homodimer.

The protein resides in the cytoplasm. The enzyme catalyses tRNA(Pro) + L-proline + ATP = L-prolyl-tRNA(Pro) + AMP + diphosphate. Functionally, catalyzes the attachment of proline to tRNA(Pro) in a two-step reaction: proline is first activated by ATP to form Pro-AMP and then transferred to the acceptor end of tRNA(Pro). As ProRS can inadvertently accommodate and process non-cognate amino acids such as alanine and cysteine, to avoid such errors it has two additional distinct editing activities against alanine. One activity is designated as 'pretransfer' editing and involves the tRNA(Pro)-independent hydrolysis of activated Ala-AMP. The other activity is designated 'posttransfer' editing and involves deacylation of mischarged Ala-tRNA(Pro). The misacylated Cys-tRNA(Pro) is not edited by ProRS. In Mycolicibacterium smegmatis (strain ATCC 700084 / mc(2)155) (Mycobacterium smegmatis), this protein is Proline--tRNA ligase (proS).